A 270-amino-acid polypeptide reads, in one-letter code: MPELPEVETAKNGITPYLDGFYIEKIIVRQPKLRWEVSPELSQISHQKVTALSRRAKYLIIHTAQGYIIGHLGMSGAVRIVSPDSPVNKHDHLDIVMNNGKIMRYNDPRRFGAWFWTENLDEFPLFAKLGPEPLSGEFNSDYLFKKSRKKPTAVKSFIMNNAVVVGIGNIYANEVLFQCGLHPEKPAGKITKTQAALLTETIKKELTRAIAQGGTTLKDFLQPDGKPGYFVQELQIYGKKGCPCPKCGQKIESFTVGQRNSYVCLHCQKK.

The active-site Schiff-base intermediate with DNA is Pro2. Glu3 functions as the Proton donor in the catalytic mechanism. The active-site Proton donor; for beta-elimination activity is Lys57. Positions 90, 109, and 150 each coordinate DNA. The FPG-type zinc finger occupies Gln235–Lys269. Arg259 serves as the catalytic Proton donor; for delta-elimination activity.

This sequence belongs to the FPG family. In terms of assembly, monomer. Requires Zn(2+) as cofactor.

The enzyme catalyses Hydrolysis of DNA containing ring-opened 7-methylguanine residues, releasing 2,6-diamino-4-hydroxy-5-(N-methyl)formamidopyrimidine.. The catalysed reaction is 2'-deoxyribonucleotide-(2'-deoxyribose 5'-phosphate)-2'-deoxyribonucleotide-DNA = a 3'-end 2'-deoxyribonucleotide-(2,3-dehydro-2,3-deoxyribose 5'-phosphate)-DNA + a 5'-end 5'-phospho-2'-deoxyribonucleoside-DNA + H(+). Its function is as follows. Involved in base excision repair of DNA damaged by oxidation or by mutagenic agents. Acts as a DNA glycosylase that recognizes and removes damaged bases. Has a preference for oxidized purines, such as 7,8-dihydro-8-oxoguanine (8-oxoG). Has AP (apurinic/apyrimidinic) lyase activity and introduces nicks in the DNA strand. Cleaves the DNA backbone by beta-delta elimination to generate a single-strand break at the site of the removed base with both 3'- and 5'-phosphates. In Actinobacillus succinogenes (strain ATCC 55618 / DSM 22257 / CCUG 43843 / 130Z), this protein is Formamidopyrimidine-DNA glycosylase.